The sequence spans 181 residues: Small acidic protein (181 aa).

The segment at 1-181 (MSAARESHPH…KMMFVKSSGS (181 aa)) is disordered. Lys-13 is covalently cross-linked (Glycyl lysine isopeptide (Lys-Gly) (interchain with G-Cter in SUMO2)). Phosphoserine occurs at positions 15 and 17. The span at 48–78 (GKKEHTGRLVIGDHKSTSHFRTGEEDKKINE) shows a compositional bias: basic and acidic residues. A Glycyl lysine isopeptide (Lys-Gly) (interchain with G-Cter in SUMO2) cross-link involves residue Lys-62. Ser-63 bears the Phosphoserine mark. Residue Lys-75 forms a Glycyl lysine isopeptide (Lys-Gly) (interchain with G-Cter in SUMO2) linkage. Residues Ser-87, Ser-125, and Ser-145 each carry the phosphoserine modification. Residues 106–147 (EVDDHDGEGDVAGDDDDDDSPDPESPDDSESDSESEKEESTE) show a composition bias toward acidic residues. Basic and acidic residues predominate over residues 151–169 (AAEHPDEVEDSKNKKDAKS). Residues Lys-172 and Lys-177 each carry the N6-acetyllysine modification.

This sequence belongs to the SMAP family.

This Bos taurus (Bovine) protein is Small acidic protein (SMAP).